The sequence spans 151 residues: Endoribonuclease YbeY (151 aa).

Zn(2+) is bound by residues His108, His112, and Asp118.

The protein belongs to the endoribonuclease YbeY family. The cofactor is Zn(2+).

It localises to the cytoplasm. In terms of biological role, single strand-specific metallo-endoribonuclease involved in late-stage 70S ribosome quality control and in maturation of the 3' terminus of the 16S rRNA. In Porphyromonas gingivalis (strain ATCC BAA-308 / W83), this protein is Endoribonuclease YbeY.